The chain runs to 88 residues: Small ribosomal subunit protein uS17 (88 aa).

The protein belongs to the universal ribosomal protein uS17 family. Part of the 30S ribosomal subunit.

One of the primary rRNA binding proteins, it binds specifically to the 5'-end of 16S ribosomal RNA. The sequence is that of Small ribosomal subunit protein uS17 from Prochlorococcus marinus (strain MIT 9515).